Here is a 484-residue protein sequence, read N- to C-terminus: Phospholipase A1-Ialpha2, chloroplastic (484 aa).

The transit peptide at 1–63 (MALIQNPNMK…LAPVILNSPV (63 aa)) directs the protein to the chloroplast. Positions 295 to 299 (GHSMG) match the GXSXG motif. Serine 297 acts as the Acyl-ester intermediate in catalysis. Residues aspartate 360 and histidine 411 each act as charge relay system in the active site.

This sequence belongs to the AB hydrolase superfamily. Lipase family. Ubiquitous. Highest expression in flowers and leaves.

The protein resides in the plastid. The protein localises to the chloroplast. It is found in the plastoglobule. The enzyme catalyses a 1,2-diacyl-3-O-[alpha-D-galactosyl-(1-&gt;6)-beta-D-galactosyl]-sn-glycerol + H2O = acyl-3-O-[alpha-D-galactosyl-(1-&gt;6)-beta-D-galactosyl]-sn-glycerol + a fatty acid + H(+). It catalyses the reaction a 1,2-diacyl-3-O-(beta-D-galactosyl)-sn-glycerol + H2O = an acyl-3-O-(beta-D-galactosyl)-sn-glycerol + a fatty acid + H(+). In terms of biological role, acylhydrolase that catalyzes the hydrolysis of phosphatidylcholine at the sn-1 position. Has a strong galactolipase activity toward monogalactosyldiacylglycerol (MGDG) and digalactosyldiacylglycerol (DGDG). Low triacylglycerol (TAG) lipase activity. Plays a role in plant growth and in leaf senescence. The polypeptide is Phospholipase A1-Ialpha2, chloroplastic (Arabidopsis thaliana (Mouse-ear cress)).